We begin with the raw amino-acid sequence, 146 residues long: ATP synthase epsilon chain (146 aa).

A disordered region spans residues 103–124; sequence QAERELGQLPEEEDEDSRRARE.

The protein belongs to the ATPase epsilon chain family. F-type ATPases have 2 components, CF(1) - the catalytic core - and CF(0) - the membrane proton channel. CF(1) has five subunits: alpha(3), beta(3), gamma(1), delta(1), epsilon(1). CF(0) has three main subunits: a, b and c.

The protein localises to the cell membrane. Functionally, produces ATP from ADP in the presence of a proton gradient across the membrane. This is ATP synthase epsilon chain from Rubrobacter xylanophilus (strain DSM 9941 / JCM 11954 / NBRC 16129 / PRD-1).